We begin with the raw amino-acid sequence, 352 residues long: Nuclear receptor subfamily 1 group I member 3 (352 aa).

The segment at residues 8 to 83 is a DNA-binding region (nuclear receptor); sequence LRNCVVCGDQ…AGMRKDMILS (76 aa). Residues 11–31 form an NR C4-type zinc finger; sequence CVVCGDQATGYHFNALTCEGC. Residue Thr-38 is modified to Phosphothreonine; by PKC. The NR C4-type zinc finger occupies 47 to 71; that stretch reads CPFAGSCEVSKTQRRHCPACRLQKC. The NR LBD domain maps to 109–352; sequence EQEELIRTLL…MMPLLQEICS (244 aa).

The protein belongs to the nuclear hormone receptor family. NR1 subfamily. As to quaternary structure, interacts with ECT2. Heterodimer of NR1I3 and RXR. Interacts with PSMC4. Directly interacts with DNAJC7. The DNAJC7-NR1I3 complex may also include HSP90. Interacts with CRY1. Interacts with CRY2 in a ligand-dependent manner. Post-translationally, phosphorylated at Thr-38 by PKC, dephosphorylation of Thr-38 is required for nuclear translocation and activation. As to expression, predominantly expressed in liver.

It is found in the nucleus. It localises to the cytoplasm. Its subcellular location is the cytoskeleton. Functionally, binds and transactivates the retinoic acid response elements that control expression of the retinoic acid receptor beta 2 and alcohol dehydrogenase 3 genes. Transactivates both the phenobarbital responsive element module of the human CYP2B6 gene and the CYP3A4 xenobiotic response element. The chain is Nuclear receptor subfamily 1 group I member 3 (NR1I3) from Homo sapiens (Human).